The following is a 148-amino-acid chain: Urease accessory protein UreE (148 aa).

This sequence belongs to the UreE family.

It is found in the cytoplasm. Its function is as follows. Involved in urease metallocenter assembly. Binds nickel. Probably functions as a nickel donor during metallocenter assembly. This is Urease accessory protein UreE from Geobacillus kaustophilus (strain HTA426).